The sequence spans 1010 residues: BrkA autotransporter (1010 aa).

Positions 1–42 (MYLDRFRQCPSSLQIPRSAWRLHALAAALALAGMARLAPAAA) are cleaved as a signal peptide. An Autotransporter domain is found at 742 to 1010 (LRADAGGPWA…SFHAGYRYSF (269 aa)).

It is found in the periplasm. The protein localises to the secreted. It localises to the cell surface. The protein resides in the cell outer membrane. Its function is as follows. Inhibits the classical pathway of complement activation and prevents accumulation of deposited C4. This chain is BrkA autotransporter, found in Bordetella pertussis (strain Tohama I / ATCC BAA-589 / NCTC 13251).